We begin with the raw amino-acid sequence, 197 residues long: CASP-like protein 0U1 (197 aa).

Residues 1 to 13 (MDDFDPTVTNSPK) are Cytoplasmic-facing. A helical membrane pass occupies residues 14-34 (FRLIAVQCLFSITAFAAMLSQ). Topologically, residues 35-63 (RHGLAGPDEMTLEECGPQACGYQKFSNFK) are extracellular. Residues 64 to 84 (FLIAVCIIYAVFSLVVMAAYL) traverse the membrane as a helical segment. Residues 85–99 (LQRVPPPVTELTAYT) are Cytoplasmic-facing. Residues 100–120 (VMNVLLFAAFAMSATSCNITI) form a helical membrane-spanning segment. Residues 121–135 (VDPVYPVCKRATSAK) lie on the Extracellular side of the membrane. A helical membrane pass occupies residues 136-156 (ASIAFAFFTWLAVCFSMLFTY). Over 157–197 (KEWRDVDYHVPGSGAYEFVPGVTSGSSRSSYPPQASSSSYA) the chain is Cytoplasmic. The interval 178-197 (VTSGSSRSSYPPQASSSSYA) is disordered. Residues 180-197 (SGSSRSSYPPQASSSSYA) show a composition bias toward low complexity.

It belongs to the Casparian strip membrane proteins (CASP) family. Homodimer and heterodimers.

The protein resides in the cell membrane. In Micromonas commoda (strain RCC299 / NOUM17 / CCMP2709) (Picoplanktonic green alga), this protein is CASP-like protein 0U1.